The following is a 916-amino-acid chain: DNA topoisomerase 1 alpha (916 aa).

Residues 1-369 (MGTETVSKPV…SSPSSGDGQK (369 aa)) form a disordered region. Positions 34-47 (SNSNQSKSNSQRSK) are enriched in low complexity. Residues 60–76 (PVTSPNGTTPSNKTSIV) show a composition bias toward polar residues. Over residues 77–93 (KSSMPSSSSKASPAKSP) the composition is skewed to low complexity. Residues 102-119 (VKDRSQLQKDQSECKIEH) show a composition bias toward basic and acidic residues. Residues 130–148 (SILSGNKGPTSSRQVSSPQ) show a composition bias toward polar residues. Residues 149 to 168 (PEKKNNGDRPLDRASRIIKD) are compositionally biased toward basic and acidic residues. At S170 the chain carries Phosphoserine. Residues 230 to 239 (KNSSADQSSL) show a composition bias toward polar residues. The segment covering 253–267 (MKQDSVKKEIDDKGR) has biased composition (basic and acidic residues). Over residues 285–294 (GTDDDDDDDV) the composition is skewed to acidic residues. Position 286 is a phosphothreonine (T286). Residues 354-366 (YSTSSKSSPSSGD) show a composition bias toward low complexity. Interaction with DNA regions lie at residues 577 to 578 (KY), 640 to 645 (RAGNEK), and 731 to 733 (TAK). One can recognise a Topo IB-type catalytic domain in the interval 584 to 914 (GSSLKGLSDK…MDVEPEYRFS (331 aa)). Residues 778 to 860 (QRTVSKTHGA…ERDMHTKEDL (83 aa)) are a coiled coil. Y872 serves as the catalytic O-(3'-phospho-DNA)-tyrosine intermediate.

It belongs to the type IB topoisomerase family. In terms of assembly, interacts with DEK3. As to expression, expressed in inflorescence meristems. Expressed in primordia of sepals, petals, stamens, carpels and ovules. Expressed in midstage embryos.

It localises to the nucleus. The catalysed reaction is ATP-independent breakage of single-stranded DNA, followed by passage and rejoining.. In terms of biological role, releases the supercoiling and torsional tension of DNA introduced during the DNA replication and transcription by transiently cleaving and rejoining one strand of the DNA duplex. Introduces a single-strand break via transesterification at a target site in duplex DNA. The scissile phosphodiester is attacked by the catalytic tyrosine of the enzyme, resulting in the formation of a DNA-(3'-phosphotyrosyl)-enzyme intermediate and the expulsion of a 5'-OH DNA strand. The free DNA strand then rotates around the intact phosphodiester bond on the opposing strand, thus removing DNA supercoils. Finally, in the religation step, the DNA 5'-OH attacks the covalent intermediate to expel the active-site tyrosine and restore the DNA phosphodiester backbone. Can complement a TOP1-deficient yeast mutant. Plays a critical role in the maintenance of a regular pattern of organ initiation. Topoisomerases I enzymes (TOP1A and TOP1B) are essential for plant survival. Functions together with the stem cell maintenance gene WUSCHEL (WUS) in stem cell regulation. Required to maintain developmentally regulated gene repression. Functions synergistically with chromatin remodeling factors. Is required for the repression of WUS expression in flower development. Plays a role in polycomb group (PcG) protein-mediated histone H3 trimethylation on 'Lys-27' (H3K27me3) at the WUS gene locus. H3K27me3 induces transcriptional repression of WUS. May assist AGAMOUS (AG) in recruiting PcG proteins to WUS locus. Reduces nucleosome density, especially at genes that are targets of PcG proteins. Plays a role in epigenetic silencing. Involved in RNA-directed DNA methylation (RdDM) by promoting Pol V transcription to generate long non-coding RNA transcripts. Is dispensable for Pol IV-mediated small interfering RNA (siRNA) biogenesis. Promotes transposable element (TE) silencing at endogenous RdDM target loci through histone H3 dimethylation of 'Lys-9' (H3K9me2). Promotes the production of Pol V-dependent long non-coding transcripts that facilitate the recruitment of siRNA-AGO4 and AGO4 occupancy at TEs. The sequence is that of DNA topoisomerase 1 alpha from Arabidopsis thaliana (Mouse-ear cress).